Here is a 439-residue protein sequence, read N- to C-terminus: Ectonucleotide pyrophosphatase/phosphodiesterase family member 7 (439 aa).

The signal sequence occupies residues methionine 1–glycine 21. At alanine 22–serine 414 the chain is on the extracellular side. 2 residues coordinate Zn(2+): aspartate 36 and threonine 72. Residues valine 69–cysteine 75 are required for enzyme activity. The active-site Nucleophile is threonine 72. Substrate is bound at residue asparagine 93. N-linked (GlcNAc...) asparagine glycans are attached at residues asparagine 97, asparagine 118, asparagine 143, and asparagine 165. Residues aspartate 196, histidine 200, aspartate 243, and histidine 244 each contribute to the Zn(2+) site. Asparagine 264 carries an N-linked (GlcNAc...) asparagine glycan. Histidine 350 serves as a coordination point for Zn(2+). Residues alanine 415–leucine 435 form a helical membrane-spanning segment. Topologically, residues alanine 436 to leucine 439 are cytoplasmic.

Zn(2+) is required as a cofactor. N-glycosylated; required for activity and transport to the plasma membrane. In terms of tissue distribution, expressed in liver and small intestine.

The protein localises to the cell membrane. The catalysed reaction is a sphingomyelin + H2O = phosphocholine + an N-acylsphing-4-enine + H(+). The enzyme catalyses a 1-O-alkyl-2-acetyl-sn-glycero-3-phosphocholine + H2O = a 1-O-alkyl-2-acetyl-sn-glycerol + phosphocholine + H(+). It carries out the reaction 1-O-octadecyl-2-acetyl-sn-glycero-3-phosphocholine + H2O = 1-O-octadecyl-2-acetyl-sn-glycerol + phosphocholine + H(+). It catalyses the reaction 1-hexadecanoyl-sn-glycero-3-phosphocholine + H2O = 1-hexadecanoyl-sn-glycerol + phosphocholine + H(+). Its function is as follows. Choline-specific phosphodiesterase that hydrolyzes sphingomyelin releasing the ceramide and phosphocholine and therefore is involved in sphingomyelin digestion, ceramide formation, and fatty acid (FA) absorption in the gastrointestinal tract. Also has phospholipase C activity and can also cleave phosphocholine from palmitoyl lyso-phosphatidylcholine and platelet-activating factor (PAF) leading to its inactivation. Does not have nucleotide pyrophosphatase activity. May promote cholesterol absorption by affecting the levels of sphingomyelin derived from either diet or endogenous sources, in the intestinal lumen. In Mus musculus (Mouse), this protein is Ectonucleotide pyrophosphatase/phosphodiesterase family member 7.